The following is a 195-amino-acid chain: MILMITQHPLILASASPRRTELLRQIGVPHTIRPADVLEEAPYPMTADEYVMYLSRKKARAVAKPGEIVLAADTVVALDQQILEKPADQPAALEMFRLLSGRTHEVVTGVTLLQDEREETFTVTTTVRFCEIPESWMLSYAATDEPYDKAGGYGIQGKGGLFVEAIDGDYYNVVGLPINPISRRLEAFGIEPMFA.

Catalysis depends on Asp-73, which acts as the Proton acceptor.

It belongs to the Maf family. YhdE subfamily. A divalent metal cation is required as a cofactor.

It localises to the cytoplasm. It catalyses the reaction dTTP + H2O = dTMP + diphosphate + H(+). The catalysed reaction is UTP + H2O = UMP + diphosphate + H(+). Its function is as follows. Nucleoside triphosphate pyrophosphatase that hydrolyzes dTTP and UTP. May have a dual role in cell division arrest and in preventing the incorporation of modified nucleotides into cellular nucleic acids. This Exiguobacterium sibiricum (strain DSM 17290 / CCUG 55495 / CIP 109462 / JCM 13490 / 255-15) protein is dTTP/UTP pyrophosphatase.